We begin with the raw amino-acid sequence, 1020 residues long: C protein alpha-antigen (1020 aa).

The first 41 residues, 1-41 (MFRRSKNNSYDTSQTKQRFSIKKFKFGAASVLIGLSFLGGV), serve as a signal peptide directing secretion. Residues 227–964 (VPDKDKYDPT…EVTVHVTPKP (738 aa)) form a 9 X 82 AA tandem repeats region. Disordered stretches follow at residues 261-281 (DGSK…VPGD), 306-330 (PKPV…GTPV), 342-363 (PDGS…VPGD), 388-445 (PKPV…VPGD), 470-494 (PKPV…GTPV), 506-527 (PDGS…VPGD), 552-576 (PKPV…GTPV), 588-610 (PDGS…PGDH), 634-658 (PKPV…GTPV), 670-692 (PDGS…PGDH), 716-740 (PKPV…GTPV), 752-774 (PDGS…PGDH), 798-822 (PKPV…GTPV), 834-856 (PDGS…PGDH), 880-904 (PKPV…GTPV), and 962-989 (PKPV…KLPA). Positions 272 to 281 (DRPDTNVPGD) are enriched in basic and acidic residues. Positions 320–329 (GETTVPQGTP) are enriched in polar residues. The segment covering 354-363 (DRPDTNVPGD) has biased composition (basic and acidic residues). The segment covering 402-411 (GETTVPQGTP) has biased composition (polar residues). The span at 436–445 (DRPDTNVPGD) shows a compositional bias: basic and acidic residues. Over residues 484–493 (GETTVPQGTP) the composition is skewed to polar residues. Over residues 518-527 (DRPDTNVPGD) the composition is skewed to basic and acidic residues. Polar residues predominate over residues 566 to 575 (GETTVPQGTP). Residues 600–610 (DRPDTNVPGDH) show a composition bias toward basic and acidic residues. A compositionally biased stretch (polar residues) spans 648–657 (GETTVPQGTP). A compositionally biased stretch (basic and acidic residues) spans 682–692 (DRPDTNVPGDH). The span at 730-739 (GETTVPQGTP) shows a compositional bias: polar residues. Over residues 764-774 (DRPDTNVPGDH) the composition is skewed to basic and acidic residues. Positions 812 to 821 (GETTVPQGTP) are enriched in polar residues. Residues 846–856 (DRPDTNVPGDH) show a composition bias toward basic and acidic residues. Residues 894–903 (GETTVPQGTP) show a composition bias toward polar residues. Residues 987–991 (LPATG) carry the LPXTG sorting signal motif. Thr990 is modified (pentaglycyl murein peptidoglycan amidated threonine). The propeptide at 991–1020 (GENATPFFNVAALTIISSVGLLSVSKKKED) is removed by sortase.

It localises to the secreted. It is found in the cell wall. In terms of biological role, may play a role in both virulence and immunity. This chain is C protein alpha-antigen (bca), found in Streptococcus agalactiae serotype Ia (strain ATCC 27591 / A909 / CDC SS700).